A 277-amino-acid chain; its full sequence is Shikimate dehydrogenase (NADP(+)) (277 aa).

Shikimate contacts are provided by residues 15-17 (SLS) and T62. K66 acts as the Proton acceptor in catalysis. N87 and D102 together coordinate shikimate. Residues 127 to 131 (GAGGA), 151 to 156 (NRTVDK), and I219 contribute to the NADP(+) site. Shikimate is bound at residue Y221. G242 contacts NADP(+).

It belongs to the shikimate dehydrogenase family. As to quaternary structure, homodimer.

The enzyme catalyses shikimate + NADP(+) = 3-dehydroshikimate + NADPH + H(+). The protein operates within metabolic intermediate biosynthesis; chorismate biosynthesis; chorismate from D-erythrose 4-phosphate and phosphoenolpyruvate: step 4/7. Involved in the biosynthesis of the chorismate, which leads to the biosynthesis of aromatic amino acids. Catalyzes the reversible NADPH linked reduction of 3-dehydroshikimate (DHSA) to yield shikimate (SA). The protein is Shikimate dehydrogenase (NADP(+)) of Bacillus cereus (strain ZK / E33L).